The primary structure comprises 601 residues: Glutamyl-tRNA(Gln) amidotransferase subunit B, mitochondrial (601 aa).

A mitochondrion-targeting transit peptide spans 1–52; the sequence is MLQQWLRQSPGAARFLRGSCCRGPQSGSLRHSPLPTAPHRCIRSLQTSATES.

Belongs to the GatB/GatE family. GatB subfamily. As to quaternary structure, subunit of the heterotrimeric GatCAB amidotransferase (AdT) complex, composed of A, B and C subunits.

Its subcellular location is the mitochondrion. It carries out the reaction L-glutamyl-tRNA(Gln) + L-glutamine + ATP + H2O = L-glutaminyl-tRNA(Gln) + L-glutamate + ADP + phosphate + H(+). Its function is as follows. Allows the formation of correctly charged Gln-tRNA(Gln) through the transamidation of misacylated Glu-tRNA(Gln) in the mitochondria. The reaction takes place in the presence of glutamine and ATP through an activated gamma-phospho-Glu-tRNA(Gln). The polypeptide is Glutamyl-tRNA(Gln) amidotransferase subunit B, mitochondrial (Neosartorya fischeri (strain ATCC 1020 / DSM 3700 / CBS 544.65 / FGSC A1164 / JCM 1740 / NRRL 181 / WB 181) (Aspergillus fischerianus)).